The chain runs to 247 residues: Small ribosomal subunit protein uS3 (247 aa).

Residues I39–K111 enclose the KH type-2 domain. Residues E221 to N247 are disordered. A compositionally biased stretch (basic and acidic residues) spans R236–N247.

It belongs to the universal ribosomal protein uS3 family. As to quaternary structure, part of the 30S ribosomal subunit. Forms a tight complex with proteins S10 and S14.

Its function is as follows. Binds the lower part of the 30S subunit head. Binds mRNA in the 70S ribosome, positioning it for translation. In Metamycoplasma arthritidis (strain 158L3-1) (Mycoplasma arthritidis), this protein is Small ribosomal subunit protein uS3.